The sequence spans 82 residues: uncharacterized protein (82 aa).

3 helical membrane passes run 4 to 26 (IAVL…AGHF), 31 to 50 (FWVA…VTLA), and 55 to 77 (SFIF…TLFL).

It localises to the cell membrane. This is an uncharacterized protein from Bacillus subtilis (strain 168).